A 374-amino-acid chain; its full sequence is Trehalose-phosphate phosphatase B (374 aa).

This sequence belongs to the trehalose phosphatase family. The cofactor is a divalent metal cation. Expressed in flowers.

It catalyses the reaction alpha,alpha-trehalose 6-phosphate + H2O = alpha,alpha-trehalose + phosphate. It participates in glycan biosynthesis; trehalose biosynthesis. Removes the phosphate from trehalose 6-phosphate to produce free trehalose. Trehalose accumulation in plant may improve abiotic stress tolerance. This chain is Trehalose-phosphate phosphatase B (TPPB), found in Arabidopsis thaliana (Mouse-ear cress).